We begin with the raw amino-acid sequence, 277 residues long: Large ribosomal subunit protein uL2 (277 aa).

A disordered region spans residues 199–277 (DHMNTSIGKA…ILLSRHKRKK (79 aa)). A compositionally biased stretch (basic residues) spans 209-220 (GRNRWLGRKPHN).

The protein belongs to the universal ribosomal protein uL2 family. Part of the 50S ribosomal subunit. Forms a bridge to the 30S subunit in the 70S ribosome.

In terms of biological role, one of the primary rRNA binding proteins. Required for association of the 30S and 50S subunits to form the 70S ribosome, for tRNA binding and peptide bond formation. It has been suggested to have peptidyltransferase activity; this is somewhat controversial. Makes several contacts with the 16S rRNA in the 70S ribosome. This chain is Large ribosomal subunit protein uL2, found in Bradyrhizobium diazoefficiens (strain JCM 10833 / BCRC 13528 / IAM 13628 / NBRC 14792 / USDA 110).